The chain runs to 426 residues: Tol-Pal system protein TolB (426 aa).

The N-terminal stretch at 1 to 25 is a signal peptide; the sequence is MNAMSRISRRIFLALALSLAGLAQA.

Belongs to the TolB family. In terms of assembly, the Tol-Pal system is composed of five core proteins: the inner membrane proteins TolA, TolQ and TolR, the periplasmic protein TolB and the outer membrane protein Pal. They form a network linking the inner and outer membranes and the peptidoglycan layer.

It localises to the periplasm. Its function is as follows. Part of the Tol-Pal system, which plays a role in outer membrane invagination during cell division and is important for maintaining outer membrane integrity. This Dechloromonas aromatica (strain RCB) protein is Tol-Pal system protein TolB.